A 469-amino-acid polypeptide reads, in one-letter code: CBL-interacting serine/threonine-protein kinase 16 (469 aa).

The region spanning 15-278 (YNIGRLLGTG…MSEIKMIPWF (264 aa)) is the Protein kinase domain. Residues 21–29 (LGTGNFAKV) and Lys-44 contribute to the ATP site. The active-site Proton acceptor is Asp-139. The activation loop stretch occupies residues 157–193 (DFGLSALMMPEGLGGRRGSSDDLLHTRCGTPAYVAPE). The residue at position 161 (Ser-161) is a Phosphoserine. Thr-182 bears the Phosphothreonine mark. The disordered stretch occupies residues 290–320 (IDETIPSPPEPPTKKKKKDLNEKEDDGASPR). Residues 317–342 (ASPRSFNAFQFITSMSSGFDLSNLFE) enclose the NAF domain. The PPI stretch occupies residues 346 to 376 (KPKRMFTSKFPAKSVKERLETAAREMDMRVK). A disordered region spans residues 447–469 (DDEDDVTTNDNVDTNDNKINNVS). Over residues 454-469 (TNDNVDTNDNKINNVS) the composition is skewed to low complexity.

It belongs to the protein kinase superfamily. CAMK Ser/Thr protein kinase family. SNF1 subfamily. Part of a K(+)-channel calcium-sensing kinase/phosphatase complex composed by a calcium sensor CBL (CBL1, CBL2, CBL3 or CBL9), a kinase CIPK (CIPK6, CIPK16 or CIPK23), a phosphatase PP2C (AIP1) and a K(+)-channel (AKT1). Interacts with AKT1, CBL1, CBL2, CBL3 and CBL9. Mn(2+) is required as a cofactor.

The enzyme catalyses L-seryl-[protein] + ATP = O-phospho-L-seryl-[protein] + ADP + H(+). It carries out the reaction L-threonyl-[protein] + ATP = O-phospho-L-threonyl-[protein] + ADP + H(+). Functionally, CIPK serine-threonine protein kinases interact with CBL proteins. Binding of a CBL protein to the regulatory NAF domain of CIPK protein lead to the activation of the kinase in a calcium-dependent manner. Downstream of CBL1, CBL2, CBL3 and CBL9, regulates by phosphorylation the K(+) conductance and uptake of AKT1. The chain is CBL-interacting serine/threonine-protein kinase 16 (CIPK16) from Arabidopsis thaliana (Mouse-ear cress).